A 61-amino-acid chain; its full sequence is Small ribosomal subunit protein uS14 (61 aa).

Positions 24, 27, 40, and 43 each coordinate Zn(2+).

Belongs to the universal ribosomal protein uS14 family. Zinc-binding uS14 subfamily. In terms of assembly, part of the 30S ribosomal subunit. Contacts proteins S3 and S10. Zn(2+) is required as a cofactor.

Functionally, binds 16S rRNA, required for the assembly of 30S particles and may also be responsible for determining the conformation of the 16S rRNA at the A site. This Chloroflexus aurantiacus (strain ATCC 29364 / DSM 637 / Y-400-fl) protein is Small ribosomal subunit protein uS14.